The following is a 185-amino-acid chain: MIEVGDLKKGMFIIYDGEIYRVLEASKHFMGRGSGLIRTKLKNVKTGLVREVNFPSGDKVPEAELSFRKAQYLYRDGDHYYFMTLDDYEQYALSEEEIGDAKYYLVENMEVDLVFHEGTPIGIELPTTVELTVVETEPSFKGDTVSGGGKPAVLETGLKITVPYFIEVGDKIKVDTRTGEYVGRA.

Belongs to the elongation factor P family.

It is found in the cytoplasm. The protein operates within protein biosynthesis; polypeptide chain elongation. Functionally, involved in peptide bond synthesis. Stimulates efficient translation and peptide-bond synthesis on native or reconstituted 70S ribosomes in vitro. Probably functions indirectly by altering the affinity of the ribosome for aminoacyl-tRNA, thus increasing their reactivity as acceptors for peptidyl transferase. This chain is Elongation factor P, found in Thermotoga petrophila (strain ATCC BAA-488 / DSM 13995 / JCM 10881 / RKU-1).